A 184-amino-acid chain; its full sequence is Probable RNA 2'-phosphotransferase (184 aa).

Belongs to the KptA/TPT1 family.

In terms of biological role, removes the 2'-phosphate from RNA via an intermediate in which the phosphate is ADP-ribosylated by NAD followed by a presumed transesterification to release the RNA and generate ADP-ribose 1''-2''-cyclic phosphate (APPR&gt;P). May function as an ADP-ribosylase. This Escherichia coli (strain 55989 / EAEC) protein is Probable RNA 2'-phosphotransferase.